The primary structure comprises 152 residues: MFRGASAINLDTKGRIAIPKRYREPLHAEFNSQIVITVDFQSPCLLLYPFDEWSKIEAKLLLLSDTRATERAMKRLLLGYAHECELDGNGRILLPPPLRQYANLEKRAMLVGQLNKFELWDETAWQKQIEQSRETIQSEEFADNERLADFSL.

SpoVT-AbrB domains lie at 5–52 (ASAI…PFDE) and 81–124 (AHEC…DETA).

This sequence belongs to the MraZ family. In terms of assembly, forms oligomers.

It is found in the cytoplasm. Its subcellular location is the nucleoid. The sequence is that of Transcriptional regulator MraZ from Shewanella sediminis (strain HAW-EB3).